The primary structure comprises 421 residues: 2',3'-cyclic-nucleotide 3'-phosphodiesterase (421 aa).

Ser-6 and Ser-9 each carry phosphoserine. Tyr-110 bears the Phosphotyrosine mark. Position 170 is a phosphoserine (Ser-170). Residue His-251 is the Proton acceptor of the active site. Thr-253 is a substrate binding site. The Proton donor role is filled by His-330. Thr-332 provides a ligand contact to substrate. Ser-359 bears the Phosphoserine mark. Residue Cys-418 is modified to Cysteine methyl ester. A lipid anchor (S-farnesyl cysteine) is attached at Cys-418. The propeptide at 419 to 421 (TII) is removed in mature form.

Belongs to the 2H phosphoesterase superfamily. CNPase family. In terms of assembly, exists as monomers and homodimers.

It localises to the membrane. The protein resides in the melanosome. It carries out the reaction a nucleoside 2',3'-cyclic phosphate + H2O = a nucleoside 2'-phosphate + H(+). Its function is as follows. Catalyzes the formation of 2'-nucleotide products from 2',3'-cyclic substrates. May participate in RNA metabolism in the myelinating cell, CNP is the third most abundant protein in central nervous system myelin. This is 2',3'-cyclic-nucleotide 3'-phosphodiesterase from Pongo abelii (Sumatran orangutan).